The following is a 696-amino-acid chain: Interleukin-1 receptor accessory protein-like 1 (696 aa).

Residues 1–24 (MKAPIPHLILLYATFTQSLKVVTK) form the signal peptide. Positions 25–134 (RGSADGCTDW…YCMKVSISLT (110 aa)) constitute an Ig-like C2-type 1 domain. Over 25 to 357 (RGSADGCTDW…LLHKRELMYT (333 aa)) the chain is Extracellular. Cystine bridges form between cysteine 31-cysteine 126 and cysteine 53-cysteine 118. 3 N-linked (GlcNAc...) asparagine glycosylation sites follow: asparagine 63, asparagine 122, and asparagine 138. Cystine bridges form between cysteine 143-cysteine 185 and cysteine 164-cysteine 216. Ig-like C2-type domains follow at residues 143–232 (CYNS…TELT) and 242–350 (PKLL…VLLH). N-linked (GlcNAc...) asparagine glycans are attached at residues asparagine 213, asparagine 264, and asparagine 331. A disulfide bond links cysteine 267 and cysteine 334. Residues 358 to 378 (VELAGGLGAILLLLVCSVTIY) traverse the membrane as a helical segment. Topologically, residues 379–696 (KCYKIEIMLF…RETSISSVIW (318 aa)) are cytoplasmic. The 157-residue stretch at 403–559 (KDYDAYLSYT…KFWKRLQYEM (157 aa)) folds into the TIR domain. Residue glutamate 491 is part of the active site. The segment at 549–644 (SKFWKRLQYE…TGTLPLTSIG (96 aa)) is interaction with NCS1. A disordered region spans residues 659-680 (GQRPQTKSSREPNPDEAHTNSA). The segment covering 666 to 676 (SSREPNPDEAH) has biased composition (basic and acidic residues).

The protein belongs to the interleukin-1 receptor family. In terms of assembly, homodimer. Interacts (calcium-independent) with NCS1/FREQ. Interacts (via the first immunoglobilin domain) with PTPRD (via the second immunoglobilin domain); this interaction is PTPRD-splicing-dependent and induces pre- and post-synaptic differentiation of neurons and is required for IL1RAPL1-mediated synapse formation.

The protein localises to the cell membrane. The protein resides in the cytoplasm. It localises to the cell projection. Its subcellular location is the axon. It is found in the dendrite. It catalyses the reaction NAD(+) + H2O = ADP-D-ribose + nicotinamide + H(+). May regulate secretion and presynaptic differentiation through inhibition of the activity of N-type voltage-gated calcium channel. May activate the MAP kinase JNK. Plays a role in neurite outgrowth. During dendritic spine formation can bidirectionally induce pre- and post-synaptic differentiation of neurons by trans-synaptically binding to PTPRD. The chain is Interleukin-1 receptor accessory protein-like 1 (Il1rapl1) from Rattus norvegicus (Rat).